Here is an 895-residue protein sequence, read N- to C-terminus: Stonin-2 (895 aa).

Disordered regions lie at residues 10–101 (THQS…AISN), 144–204 (ASES…METI), and 236–279 (NEVG…PKST). Residues 64 to 73 (SHSEQDDSSE) are compositionally biased toward basic and acidic residues. 2 stretches are compositionally biased toward polar residues: residues 145–169 (SESSWTTHSEDTSSPSVAPSYTDLQ) and 179–193 (GRASGTDSTDNSSSL). Phosphoserine is present on residues Ser-278, Ser-284, and Ser-299. 2 disordered regions span residues 291–326 (ISSLNRPPSVTEAPPWRATNPFLNESLQDIQPSPIN) and 386–424 (QIDDPDPVGNAALPDDDPTASVEPDAPSPTSALSQPRDG). Short sequence motifs (NPF) lie at residues 310–312 (NPF) and 326–328 (NPF). The segment covering 311–323 (PFLNESLQDIQPS) has biased composition (polar residues). Residues 424-557 (GWPMMLRIPE…DLPVQSMDLS (134 aa)) form the SHD domain. The MHD domain occupies 565–872 (EEEITVDIRD…AHYSYKVEIE (308 aa)). Position 759 is a phosphoserine (Ser-759).

Belongs to the Stoned B family. In terms of assembly, interacts with the second C2 domain of synaptotagmins SYT1 and SYT2. Interacts with EPS15, EPS15R and ITSN1. Interacts indirectly with the AP-2 adapter complex. Interacts with TOR1A and COPS4; the interaction controls STON2 protein stability. Post-translationally, phosphorylated in vitro by PKD. In terms of processing, neddylated and ubiquitinated; leading to its degradation and inhibited by TOR1A and COPS4.

Its subcellular location is the synapse. It is found in the synaptosome. The protein resides in the cytoplasm. It localises to the membrane. Functionally, adapter protein involved in endocytic machinery. Involved in the synaptic vesicle recycling. May facilitate clathrin-coated vesicle uncoating. In Rattus norvegicus (Rat), this protein is Stonin-2 (Ston2).